A 262-amino-acid chain; its full sequence is Sulfur carrier protein FdhD (262 aa).

Cys-107 functions as the Cysteine persulfide intermediate in the catalytic mechanism.

It belongs to the FdhD family.

The protein localises to the cytoplasm. In terms of biological role, required for formate dehydrogenase (FDH) activity. Acts as a sulfur carrier protein that transfers sulfur from IscS to the molybdenum cofactor prior to its insertion into FDH. In Bacillus pumilus (strain SAFR-032), this protein is Sulfur carrier protein FdhD.